A 53-amino-acid polypeptide reads, in one-letter code: Lantibiotic paenibacillin (53 aa).

A propeptide spanning residues 1 to 24 (MKVDQMFDLDLRKSYEASELSPQA) is cleaved from the precursor. At Ala24 the chain carries N-acetylalanine. Position 25 is a 2,3-didehydroalanine (Ser) (Ser25). 2,3-didehydrobutyrine is present on residues Thr29 and Thr30. A cross-link (lanthionine (Ser-Cys)) is located at residues 34–38 (SKAVC). Cross-links (beta-methyllanthionine (Thr-Cys)) lie at residues 40-43 (TLTC), 42-45 (TCIC), and 46-49 (TGSC). A cross-link (lanthionine (Ser-Cys)) is located at residues 48–52 (SCSNC). Ser50 carries the post-translational modification 2,3-didehydroalanine (Ser).

In terms of processing, maturation of lantibiotics involves the enzymatic conversion of Thr, and Ser into dehydrated AA and the formation of thioether bonds with cysteine. This is followed by membrane translocation and cleavage of the modified precursor. The structure of the 2,3-didehydrobutyrines is not discussed in PubMed:17071789.

It localises to the secreted. Its function is as follows. Lanthionine-containing peptide antibiotic (lantibiotic) active on Gram-positive bacteria. The bactericidal activity of lantibiotics is based on depolarization of energized bacterial cytoplasmic membranes, initiated by the formation of aqueous transmembrane pores. Lacks antibacterial activity against Gram-negative bacteria. The polypeptide is Lantibiotic paenibacillin (Paenibacillus polymyxa (Bacillus polymyxa)).